We begin with the raw amino-acid sequence, 618 residues long: uncharacterized protein (618 aa).

To Rhizobium NGR234A y4qD.

This is an uncharacterized protein from Sinorhizobium fredii (strain NBRC 101917 / NGR234).